A 218-amino-acid chain; its full sequence is Thiopurine S-methyltransferase (218 aa).

The S-adenosyl-L-methionine site is built by W10, L45, E66, and R123.

The protein belongs to the class I-like SAM-binding methyltransferase superfamily. TPMT family.

It localises to the cytoplasm. It carries out the reaction S-adenosyl-L-methionine + a thiopurine = S-adenosyl-L-homocysteine + a thiopurine S-methylether.. This chain is Thiopurine S-methyltransferase, found in Pseudomonas aeruginosa (strain UCBPP-PA14).